A 141-amino-acid polypeptide reads, in one-letter code: Nuclear receptor 2C2-associated protein (141 aa).

It belongs to the NR2C2AP family.

The protein resides in the nucleus. May act as a repressor of nr2c2-mediated transactivation by suppressing the binding between nr2c2 and its response element in target genes. In Danio rerio (Zebrafish), this protein is Nuclear receptor 2C2-associated protein (nr2c2ap).